Consider the following 396-residue polypeptide: Protein btn1 (396 aa).

8 helical membrane passes run 15–35 (CFLI…SAAL), 45–65 (GVVL…ASIL), 76–96 (IGFC…SSSV), 138–158 (LAGL…NFSV), 161–181 (TLII…FVLP), 234–254 (FLVY…LLFP), 296–316 (LAIT…LYLT), and 321–341 (FVLF…VNVY).

Belongs to the battenin family.

Its subcellular location is the endoplasmic reticulum membrane. It localises to the vacuole membrane. Functionally, involved in vacuolar transport and vacuole pH homeostasis. Also required for cytokinesis. This Schizosaccharomyces pombe (strain 972 / ATCC 24843) (Fission yeast) protein is Protein btn1.